The following is a 325-amino-acid chain: Probable serine/threonine-protein phosphatase 2A activator 1 (325 aa).

The protein belongs to the PTPA-type PPIase family.

The protein localises to the cytoplasm. It catalyses the reaction [protein]-peptidylproline (omega=180) = [protein]-peptidylproline (omega=0). PPIases accelerate the folding of proteins. It catalyzes the cis-trans isomerization of proline imidic peptide bonds in oligopeptides. Acts as a regulatory subunit for PP2A-like phosphatases modulating their activity or substrate specificity, probably by inducing a conformational change in the catalytic subunit, a direct target of the PPIase. This is Probable serine/threonine-protein phosphatase 2A activator 1 (ppp2r4A) from Dictyostelium discoideum (Social amoeba).